The chain runs to 258 residues: Protein T1 (258 aa).

Residues 1 to 17 (MRRLCIILLVYVYATFA) form the signal peptide. N-linked (GlcNAc...) asparagine; by host glycans are attached at residues Asn-67, Asn-151, and Asn-172.

Belongs to the poxviruses A41 family.

The protein is Protein T1 of Rabbit fibroma virus (strain Kasza) (RFV).